Consider the following 437-residue polypeptide: MSMFLDTAKVSVQAGRGGDGMVAFRREKYVPNGGPWGGDGGKGGSVIFKVDEGLRTLIDFRYNRKFKAKSGEKGMTKGMHGRGSEDLIISVPQGTTVRDAETGKVLTDLVEHGQEFVVAKGGRGGRGNIRFATPRNPAPEIAENGEPGEERQLELELKILADVGLVGFPSVGKSTLLSVVSSAKPKIGAYHFTTIVPNLGMVRTKSGESFAMADLPGLIKGASQGVGLGTQFLRHIERTRVILHVIDMSAAEGRDPYEDYVAINKELEAYNLRLMERPQIIVANKMDMPEAKEQLQRFKEQLAAQYDDFEELPIIFPISSLAHQGLDSLLEATAELLAKTDDFLLYDEADLAEDEAYYGFAAEEKAFEISRADDAAWVLSGEKLERLFVMTNLERDESIMKFARQLRGMGVDEALRERGAKDGDIVRIGKFEFEFVD.

Positions 2–160 (SMFLDTAKVS…RQLELELKIL (159 aa)) constitute an Obg domain. Residues 161–338 (ADVGLVGFPS…LLEATAELLA (178 aa)) enclose the OBG-type G domain. GTP contacts are provided by residues 167 to 174 (GFPSVGKS), 192 to 196 (FTTIV), 214 to 217 (DLPG), 284 to 287 (NKMD), and 319 to 321 (SSL). Ser-174 and Thr-194 together coordinate Mg(2+). In terms of domain architecture, OCT spans 359–437 (GFAAEEKAFE…IGKFEFEFVD (79 aa)).

It belongs to the TRAFAC class OBG-HflX-like GTPase superfamily. OBG GTPase family. As to quaternary structure, monomer. Requires Mg(2+) as cofactor.

It is found in the cytoplasm. Functionally, an essential GTPase which binds GTP, GDP and possibly (p)ppGpp with moderate affinity, with high nucleotide exchange rates and a fairly low GTP hydrolysis rate. Plays a role in control of the cell cycle, stress response, ribosome biogenesis and in those bacteria that undergo differentiation, in morphogenesis control. The sequence is that of GTPase Obg from Streptococcus equi subsp. equi (strain 4047).